Here is a 369-residue protein sequence, read N- to C-terminus: tRNA pseudouridine synthase D (369 aa).

D80 acts as the Nucleophile in catalysis. The TRUD domain occupies 156-318; sequence GIPNWFGEQR…LKQERRALRL (163 aa).

This sequence belongs to the pseudouridine synthase TruD family.

The enzyme catalyses uridine(13) in tRNA = pseudouridine(13) in tRNA. In terms of biological role, responsible for synthesis of pseudouridine from uracil-13 in transfer RNAs. The protein is tRNA pseudouridine synthase D of Xanthomonas oryzae pv. oryzae (strain KACC10331 / KXO85).